Here is a 141-residue protein sequence, read N- to C-terminus: Cystatin (141 aa).

The signal sequence occupies residues 1 to 26; sequence MLHSQLPVAAPLRLLCALLLLPSVTM. Positions 29-129 constitute a Cystatin domain; sequence GGLSPRSVTD…CRFQVWSRPW (101 aa). A Secondary area of contact motif is present at residues 73-77; the sequence is QVVTG. 2 disulfides stabilise this stretch: Cys-91–Cys-107 and Cys-120–Cys-140.

Belongs to the cystatin family. As to expression, expressed at a low level by the venom gland (at protein level).

The protein resides in the secreted. Functionally, inhibits various C1 cysteine proteases including cathepsin L, papain and cathepsin B. This protein has no toxic activity and its function in the venom is unknown. It may play a role as a housekeeping or regulatory protein. This chain is Cystatin, found in Hoplocephalus stephensii (Stephens's banded snake).